The chain runs to 405 residues: Glucoside xylosyltransferase 1 (405 aa).

Residues 1–2 lie on the Cytoplasmic side of the membrane; sequence MR. A helical; Signal-anchor for type II membrane protein membrane pass occupies residues 3–23; it reads IYLRTFGLCIVVALLSLVFLF. The Lumenal segment spans residues 24–405; it reads SKHDEGSFSA…RLQRATPPGD (382 aa). A disordered region spans residues 46 to 65; that stretch reads SFNGAKAKQRPTATTSHRDV. N-linked (GlcNAc...) asparagine glycosylation is found at N202, N243, N277, and N372.

This sequence belongs to the glycosyltransferase 8 family.

It is found in the membrane. It catalyses the reaction 3-O-(beta-D-glucosyl)-L-seryl-[EGF-like domain protein] + UDP-alpha-D-xylose = 3-O-[alpha-D-xylosyl-(1-&gt;3)-beta-D-glucosyl]-L-seryl-[EGF-like domain protein] + UDP + H(+). In terms of biological role, glycosyltransferase which elongates the O-linked glucose attached to EGF-like repeats in the extracellular domain of Notch proteins by catalyzing the addition of xylose. This is Glucoside xylosyltransferase 1 (gxylt1) from Danio rerio (Zebrafish).